Reading from the N-terminus, the 248-residue chain is PACRG-like protein (248 aa).

Methionine 1 is subject to N-acetylmethionine. The span at 1–29 (MQKSEGSGGTQLKNRATGNYDQRTSSSTQ) shows a compositional bias: polar residues. Residues 1 to 71 (MQKSEGSGGT…LNPKTINPFG (71 aa)) form a disordered region. Low complexity predominate over residues 39–49 (SKSSLSTSSPE). Residue serine 47 is modified to Phosphoserine.

The chain is PACRG-like protein (PACRGL) from Homo sapiens (Human).